Reading from the N-terminus, the 426-residue chain is Molybdopterin molybdenumtransferase 1 (426 aa).

It belongs to the MoeA family. Requires Mg(2+) as cofactor.

It carries out the reaction adenylyl-molybdopterin + molybdate = Mo-molybdopterin + AMP + H(+). It participates in cofactor biosynthesis; molybdopterin biosynthesis. Catalyzes the insertion of molybdate into adenylated molybdopterin with the concomitant release of AMP. The chain is Molybdopterin molybdenumtransferase 1 (moeA1) from Mycobacterium tuberculosis (strain ATCC 25618 / H37Rv).